The sequence spans 714 residues: Calpain-1 catalytic subunit (714 aa).

The 300-residue stretch at 55–354 folds into the Calpain catalytic domain; it reads LFRDEAFPPV…FTRLEICNLT (300 aa). Residues Gln109 and Asp114 each coordinate Ca(2+). Residues Cys115, His272, and Asn296 contribute to the active site. Ca(2+)-binding residues include Asp318 and Asp323. Residue Thr354 is modified to Phosphothreonine. Residues 355 to 526 are domain III; the sequence is PDALKSQRVR…KKAGTQELDD (172 aa). The interval 527–542 is linker; sequence QVQAILPDEQVLSEEE. The tract at residues 543–713 is domain IV; the sequence is IDENFKALFR…LFKWLQLTMF (171 aa). EF-hand domains follow at residues 585 to 618, 615 to 650, and 680 to 714; these read FSLE…NRIR, NRIR…AGFK, and VRLE…TMFA. Ca(2+) contacts are provided by Asp598, Asp600, Asn602, Lys604, Glu609, Asp628, Asp630, Ser632, Ser634, and Glu639.

It belongs to the peptidase C2 family. As to quaternary structure, forms a heterodimer with a small (regulatory) subunit CAPNS1. Ca(2+) serves as cofactor. Post-translationally, undergoes calcium-induced successive autoproteolytic cleavages that generate a membrane-bound 78 kDa active form and an intracellular 75 kDa active form. Calpastatin reduces with high efficiency the transition from 78 kDa to 75 kDa calpain forms.

It is found in the cytoplasm. The protein localises to the cell membrane. The catalysed reaction is Broad endopeptidase specificity.. With respect to regulation, activated by micromolar concentrations of calcium and inhibited by calpastatin. Its function is as follows. Calcium-regulated non-lysosomal thiol-protease which catalyzes limited proteolysis of substrates involved in cytoskeletal remodeling and signal transduction. Proteolytically cleaves CTBP1. Cleaves and activates caspase-7 (CASP7). The sequence is that of Calpain-1 catalytic subunit from Sus scrofa (Pig).